The chain runs to 341 residues: Heat-inducible transcription repressor HrcA (341 aa).

It belongs to the HrcA family.

Negative regulator of class I heat shock genes (grpE-dnaK-dnaJ and groELS operons). Prevents heat-shock induction of these operons. The chain is Heat-inducible transcription repressor HrcA from Symbiobacterium thermophilum (strain DSM 24528 / JCM 14929 / IAM 14863 / T).